The following is a 159-amino-acid chain: Stress-induced protein 1 (159 aa).

Residues 33–141 (NNFNNIVPQQ…TVRALPIHTS (109 aa)) enclose the sHSP domain.

Belongs to the small heat shock protein (HSP20) family.

The chain is Stress-induced protein 1 from Caenorhabditis elegans.